Reading from the N-terminus, the 1382-residue chain is Histone-lysine N-methyltransferase SUVR5 (1382 aa).

Disordered stretches follow at residues 43–62 and 354–373; these read TVTG…SEPK and GNTN…NTPE. 3 C2H2-type zinc fingers span residues 735–758, 769–792, and 838–861; these read FACA…EERH, LQCI…QAVH, and FVCK…QAEH. Residues 915–935 are disordered; the sequence is RRMQGSKSLGTEGNTEAGVSP. The span at 919–928 shows a compositional bias: polar residues; sequence GSKSLGTEGN. A Pre-SET domain is found at 1145-1221; the sequence is LRCSCRSSVC…TCQNRVLQNG (77 aa). Residues Cys1147, Cys1149, Cys1154, Cys1159, Cys1182, Cys1203, Cys1207, Cys1209, and Cys1213 each contribute to the Zn(2+) site. In terms of domain architecture, SET spans 1224-1356; it reads AKLEVFRTES…AGEEITRDYG (133 aa). S-adenosyl-L-methionine-binding positions include 1234-1236, Tyr1277, and 1313-1314; these read KGW and NH. Cys1316 is a Zn(2+) binding site. Residue Tyr1355 coordinates S-adenosyl-L-methionine. Residues 1366 to 1382 enclose the Post-SET domain; the sequence is NEHPCHCKATNCRGLLS. Zn(2+) contacts are provided by Cys1370, Cys1372, and Cys1377.

The protein belongs to the class V-like SAM-binding methyltransferase superfamily. In terms of assembly, component of a regulatory complex with LDL1/SWP1. Interacts with LDL1/SWP1.

It localises to the nucleus. The protein localises to the chromosome. The enzyme catalyses L-lysyl-[histone] + S-adenosyl-L-methionine = N(6)-methyl-L-lysyl-[histone] + S-adenosyl-L-homocysteine + H(+). In terms of biological role, histone methyltransferase that functions together with its binding partner LDL1/SWP1 as one of the regulators of flower timing in Arabidopsis. Mediates H3K9me2 deposition and regulates gene expression in a DNA methylation-independent manner. Binds DNA through its zinc fingers and represses the expression of a subset of stimulus response genes. May represent a novel mechanism for plants to regulate their chromatin and transcriptional state, which may allow for the adaptability and modulation necessary to rapidly respond to environment or developmental cues. The polypeptide is Histone-lysine N-methyltransferase SUVR5 (Arabidopsis thaliana (Mouse-ear cress)).